We begin with the raw amino-acid sequence, 207 residues long: ATP-dependent dethiobiotin synthetase BioD (207 aa).

13 to 18 is an ATP binding site; the sequence is EVGKTV. Position 17 (Thr17) interacts with Mg(2+). Lys33 is an active-site residue. Residues Asp44 and 100 to 103 contribute to the ATP site; that span reads EGAG. Residues Asp44 and Glu100 each coordinate Mg(2+).

Belongs to the dethiobiotin synthetase family. Homodimer. The cofactor is Mg(2+).

It localises to the cytoplasm. It carries out the reaction (7R,8S)-7,8-diammoniononanoate + CO2 + ATP = (4R,5S)-dethiobiotin + ADP + phosphate + 3 H(+). Its pathway is cofactor biosynthesis; biotin biosynthesis; biotin from 7,8-diaminononanoate: step 1/2. Functionally, catalyzes a mechanistically unusual reaction, the ATP-dependent insertion of CO2 between the N7 and N8 nitrogen atoms of 7,8-diaminopelargonic acid (DAPA, also called 7,8-diammoniononanoate) to form a ureido ring. In Christiangramia forsetii (strain DSM 17595 / CGMCC 1.15422 / KT0803) (Gramella forsetii), this protein is ATP-dependent dethiobiotin synthetase BioD.